The primary structure comprises 514 residues: Ribonuclease Y (514 aa).

The chain crosses the membrane as a helical span at residues 3–23 (VLWMVLGLAIGIAVGAAAGYI). The 64-residue stretch at 203 to 266 (TVKAVELPSD…EVARIAMERL (64 aa)) folds into the KH domain. The region spanning 330–423 (VLAHSVEVAN…VATADAVSAA (94 aa)) is the HD domain.

It belongs to the RNase Y family.

It localises to the cell membrane. Its function is as follows. Endoribonuclease that initiates mRNA decay. This chain is Ribonuclease Y, found in Rubrobacter xylanophilus (strain DSM 9941 / JCM 11954 / NBRC 16129 / PRD-1).